The chain runs to 875 residues: DNA mismatch repair protein MutS (875 aa).

626–633 is a binding site for ATP; the sequence is GPNMAGKS. The tract at residues 830–855 is disordered; sequence RAAPPPPAPAAPKTSPVEERLREIQP. Positions 845 to 855 are enriched in basic and acidic residues; the sequence is PVEERLREIQP.

The protein belongs to the DNA mismatch repair MutS family.

This protein is involved in the repair of mismatches in DNA. It is possible that it carries out the mismatch recognition step. This protein has a weak ATPase activity. This chain is DNA mismatch repair protein MutS, found in Cereibacter sphaeroides (strain ATCC 17023 / DSM 158 / JCM 6121 / CCUG 31486 / LMG 2827 / NBRC 12203 / NCIMB 8253 / ATH 2.4.1.) (Rhodobacter sphaeroides).